A 992-amino-acid polypeptide reads, in one-letter code: ATP-dependent 6-phosphofructokinase subunit alpha (992 aa).

An N-terminal catalytic PFK domain 1 region spans residues 1–558; sequence MNNSVYGVAF…LYSNFMSTTV (558 aa). Residues glycine 193, 256 to 257, and 286 to 289 contribute to the ATP site; these read RS and GDGS. Mg(2+) is bound at residue aspartate 287. Residues 332 to 334, arginine 369, 376 to 378, glutamate 433, lysine 460, and 466 to 469 contribute to the beta-D-fructose 6-phosphate site; these read SID, MGR, and HVQR. Aspartate 334 acts as the Proton acceptor in catalysis. Positions 559-572 are interdomain linker; it reads NDDGSQLLPEADRL. Residues 573-992 form a C-terminal regulatory PFK domain 2 region; sequence NIAIVHVGAP…AAKEDSALYV (420 aa). Beta-D-fructose 2,6-bisphosphate is bound by residues arginine 643, 700 to 704, arginine 738, 745 to 747, glutamate 805, arginine 831, 837 to 840, and arginine 929; these read TVSNN, QGG, and HVQQ.

It belongs to the phosphofructokinase type A (PFKA) family. ATP-dependent PFK group I subfamily. Eukaryotic two domain clade 'E' sub-subfamily. Heterooctamer of 4 alpha and 4 beta chains. The cofactor is Mg(2+).

Its subcellular location is the cytoplasm. The catalysed reaction is beta-D-fructose 6-phosphate + ATP = beta-D-fructose 1,6-bisphosphate + ADP + H(+). It functions in the pathway carbohydrate degradation; glycolysis; D-glyceraldehyde 3-phosphate and glycerone phosphate from D-glucose: step 3/4. Allosterically activated by ADP, AMP, or fructose 2,6-bisphosphate, and allosterically inhibited by ATP or citrate. In terms of biological role, catalyzes the phosphorylation of D-fructose 6-phosphate to fructose 1,6-bisphosphate by ATP, the first committing step of glycolysis. This chain is ATP-dependent 6-phosphofructokinase subunit alpha (PFK1), found in Kluyveromyces lactis (strain ATCC 8585 / CBS 2359 / DSM 70799 / NBRC 1267 / NRRL Y-1140 / WM37) (Yeast).